Here is a 1009-residue protein sequence, read N- to C-terminus: Helicase-like transcription factor (1009 aa).

Residue Arg-27 is modified to Omega-N-methylarginine. Residues 38–287 (EFQDVIPPDD…FSEKDRPENV (250 aa)) mediate DNA binding. Lys-112 is covalently cross-linked (Glycyl lysine isopeptide (Lys-Gly) (interchain with G-Cter in SUMO2)). A Phosphotyrosine; by JAK2 modification is found at Tyr-195. Lys-211 is covalently cross-linked (Glycyl lysine isopeptide (Lys-Gly) (interchain with G-Cter in SUMO2)). 294 to 301 (DDMGLGKT) provides a ligand contact to ATP. The interval 336–365 (DDSMKLGGNNTSEKADGLSKDASRCSEQPS) is disordered. Positions 348–359 (EKADGLSKDASR) are enriched in basic and acidic residues. Ser-397, Ser-398, and Ser-400 each carry phosphoserine. In terms of domain architecture, Helicase ATP-binding spans 435-606 (IEDVAFACAL…WSLLSFLKLK (172 aa)). Residues 557–560 (DEGH) carry the DEGH box motif. Phosphothreonine is present on Thr-736. An RING-type zinc finger spans residues 760-801 (CAICLDSLTVPVITHCAHVFCKPCICQVIQNEQPHAKCPLCR). The Helicase C-terminal domain maps to 837 to 996 (ALMHALTDLR…TKKPNADEMK (160 aa)). Residues 925-1009 (SRVFLMDPAW…INEIRTLIDL (85 aa)) form an interaction with SP1 and SP3 region.

Belongs to the SNF2/RAD54 helicase family. RAD16 subfamily. As to quaternary structure, interacts with SP1 and SP3 independently of DNA; the interaction with these transcriptional factors may be required for basal transcription of target genes. Interacts with EGR1; the interaction requires prior binding to DNA and represses c-Rel via a DNA looping mechanism. Interacts with GATA4. Interacts with PCNA; the interaction promotes polyubiquitination of PCNA through association with the UBE2B-RAD18 and UBE2V2-UBE2N ubiquitin ligase complexes. Interacts with RAD18, SHPRH, UBE2V2 and UBE2N. In terms of tissue distribution, expressed in brain, heart, kidney, liver, lung, pancreas, placenta and skeletal muscle.

It localises to the cytoplasm. The protein localises to the nucleus. It is found in the nucleolus. The protein resides in the nucleoplasm. It carries out the reaction S-ubiquitinyl-[E2 ubiquitin-conjugating enzyme]-L-cysteine + [acceptor protein]-L-lysine = [E2 ubiquitin-conjugating enzyme]-L-cysteine + N(6)-ubiquitinyl-[acceptor protein]-L-lysine.. Its pathway is protein modification; protein ubiquitination. Its function is as follows. Has both helicase and E3 ubiquitin ligase activities. Possesses intrinsic ATP-dependent nucleosome-remodeling activity; This activity may be required for transcriptional activation or repression of specific target promoters. These may include the SERPINE1 and HIV-1 promoters and the SV40 enhancer, to which this protein can bind directly. Plays a role in error-free postreplication repair (PRR) of damaged DNA and maintains genomic stability through acting as a ubiquitin ligase for 'Lys-63'-linked polyubiquitination of chromatin-bound PCNA. The chain is Helicase-like transcription factor (HLTF) from Homo sapiens (Human).